A 368-amino-acid polypeptide reads, in one-letter code: F-box protein At3g17710 (368 aa).

The 46-residue stretch at M1–H46 folds into the F-box domain.

In Arabidopsis thaliana (Mouse-ear cress), this protein is F-box protein At3g17710.